We begin with the raw amino-acid sequence, 1181 residues long: 1-phosphatidylinositol 4,5-bisphosphate phosphodiesterase beta-2 (1181 aa).

The PI-PLC X-box domain occupies 312-463 (QDMTQPLNHY…LRGKILIKNK (152 aa)). The active site involves H327. 3 residues coordinate Ca(2+): N328, E357, and D359. The active site involves H374. A Ca(2+)-binding site is contributed by E408. Residues 465-534 (NQFSGPASPS…EEIKKMQSDE (70 aa)) form a disordered region. Acidic residues predominate over residues 503–525 (TEVEEEEVVEEEEEEESGNLDEE). Positions 547–663 (MSSLVNYIQP…GYLLKHEFMR (117 aa)) constitute a PI-PLC Y-box domain. Positions 666 to 791 (DKQFNPFSVD…CLRSESNMAL (126 aa)) constitute a C2 domain. A disordered region spans residues 847 to 890 (SGTPVASQSNGAPVSAGNGSTAPGTKATGEEATKEVTEPQTASL). A compositionally biased stretch (polar residues) spans 850 to 869 (PVASQSNGAPVSAGNGSTAP). The span at 874–883 (TGEEATKEVT) shows a compositional bias: basic and acidic residues. The stretch at 893 to 940 (LRELKGVVKLQRRHEKELRELERRGARRWEELLQRGAAQLAELQTQAA) forms a coiled coil. The residue at position 950 (S950) is a Phosphoserine. 2 coiled-coil regions span residues 974-1026 (PRVQ…AELK) and 1075-1141 (HIQE…VRAY). The segment at 1149 to 1181 (EAEDKPERSCEASEESCPQEPLVSKADTQESRL) is disordered. The span at 1150-1159 (AEDKPERSCE) shows a compositional bias: basic and acidic residues.

As to quaternary structure, interacts with RAC1. Forms a complex composed of at least WDR26, a G-beta:gamma unit, and PLCB2. Ca(2+) is required as a cofactor.

It catalyses the reaction a 1,2-diacyl-sn-glycero-3-phospho-(1D-myo-inositol-4,5-bisphosphate) + H2O = 1D-myo-inositol 1,4,5-trisphosphate + a 1,2-diacyl-sn-glycerol + H(+). It carries out the reaction a 1,2-diacyl-sn-glycero-3-phospho-(1D-myo-inositol) + H2O = 1D-myo-inositol 1-phosphate + a 1,2-diacyl-sn-glycerol + H(+). In terms of biological role, the production of the second messenger molecules diacylglycerol (DAG) and inositol 1,4,5-trisphosphate (IP3) is mediated by activated phosphatidylinositol-specific phospholipase C enzymes. In neutrophils, participates in a phospholipase C-activating N-formyl peptide-activated GPCR (G protein-coupled receptor) signaling pathway by promoting RASGRP4 activation by DAG, to promote neutrophil functional responses. The sequence is that of 1-phosphatidylinositol 4,5-bisphosphate phosphodiesterase beta-2 from Mus musculus (Mouse).